The sequence spans 156 residues: Small ribosomal subunit protein uS7 (156 aa).

This sequence belongs to the universal ribosomal protein uS7 family. In terms of assembly, part of the 30S ribosomal subunit. Contacts proteins S9 and S11.

In terms of biological role, one of the primary rRNA binding proteins, it binds directly to 16S rRNA where it nucleates assembly of the head domain of the 30S subunit. Is located at the subunit interface close to the decoding center, probably blocks exit of the E-site tRNA. This is Small ribosomal subunit protein uS7 from Kineococcus radiotolerans (strain ATCC BAA-149 / DSM 14245 / SRS30216).